Consider the following 462-residue polypeptide: Argininosuccinate lyase (462 aa).

The protein belongs to the lyase 1 family. Argininosuccinate lyase subfamily.

Its subcellular location is the cytoplasm. It carries out the reaction 2-(N(omega)-L-arginino)succinate = fumarate + L-arginine. It functions in the pathway amino-acid biosynthesis; L-arginine biosynthesis; L-arginine from L-ornithine and carbamoyl phosphate: step 3/3. The chain is Argininosuccinate lyase from Bacillus mycoides (strain KBAB4) (Bacillus weihenstephanensis).